We begin with the raw amino-acid sequence, 27 residues long: Cationic protein C1 (27 aa).

Its subcellular location is the secreted. It localises to the nematocyst. This chain is Cationic protein C1, found in Bunodosoma caissarum (Sea anemone).